The sequence spans 209 residues: Large ribosomal subunit protein uL3 (209 aa).

The segment at 125–148 (RHGQSRGPMAHGSRYHRRPGSMGP) is disordered.

The protein belongs to the universal ribosomal protein uL3 family. Part of the 50S ribosomal subunit. Forms a cluster with proteins L14 and L19.

Functionally, one of the primary rRNA binding proteins, it binds directly near the 3'-end of the 23S rRNA, where it nucleates assembly of the 50S subunit. The sequence is that of Large ribosomal subunit protein uL3 from Lysinibacillus sphaericus (strain C3-41).